The sequence spans 193 residues: NADH-quinone oxidoreductase subunit B (193 aa).

Cys72, Cys73, Cys137, and Cys167 together coordinate [4Fe-4S] cluster.

The protein belongs to the complex I 20 kDa subunit family. In terms of assembly, NDH-1 is composed of 14 different subunits. Subunits NuoB, C, D, E, F, and G constitute the peripheral sector of the complex. The cofactor is [4Fe-4S] cluster.

The protein localises to the cell inner membrane. It catalyses the reaction a quinone + NADH + 5 H(+)(in) = a quinol + NAD(+) + 4 H(+)(out). NDH-1 shuttles electrons from NADH, via FMN and iron-sulfur (Fe-S) centers, to quinones in the respiratory chain. Couples the redox reaction to proton translocation (for every two electrons transferred, four hydrogen ions are translocated across the cytoplasmic membrane), and thus conserves the redox energy in a proton gradient. The protein is NADH-quinone oxidoreductase subunit B of Brucella anthropi (strain ATCC 49188 / DSM 6882 / CCUG 24695 / JCM 21032 / LMG 3331 / NBRC 15819 / NCTC 12168 / Alc 37) (Ochrobactrum anthropi).